Consider the following 371-residue polypeptide: Lipoyl synthase, mitochondrial (371 aa).

A mitochondrion-targeting transit peptide spans 1 to 24 (MLSRFKCSRLQLQKRAISVTKATT). The span at 20–29 (TKATTTTASQ) shows a compositional bias: polar residues. Positions 20 to 42 (TKATTTTASQPKRRRTTTFSDAL) are disordered. [4Fe-4S] cluster-binding residues include Cys107, Cys112, Cys118, Cys138, Cys142, Cys145, and Ser353. In terms of domain architecture, Radical SAM core spans 121–342 (GGDSSKATAT…RDKALELGFL (222 aa)).

This sequence belongs to the radical SAM superfamily. Lipoyl synthase family. [4Fe-4S] cluster is required as a cofactor.

The protein localises to the mitochondrion. It carries out the reaction [[Fe-S] cluster scaffold protein carrying a second [4Fe-4S](2+) cluster] + N(6)-octanoyl-L-lysyl-[protein] + 2 oxidized [2Fe-2S]-[ferredoxin] + 2 S-adenosyl-L-methionine + 4 H(+) = [[Fe-S] cluster scaffold protein] + N(6)-[(R)-dihydrolipoyl]-L-lysyl-[protein] + 4 Fe(3+) + 2 hydrogen sulfide + 2 5'-deoxyadenosine + 2 L-methionine + 2 reduced [2Fe-2S]-[ferredoxin]. Its pathway is protein modification; protein lipoylation via endogenous pathway; protein N(6)-(lipoyl)lysine from octanoyl-[acyl-carrier-protein]: step 2/2. In terms of biological role, catalyzes the radical-mediated insertion of two sulfur atoms into the C-6 and C-8 positions of the octanoyl moiety bound to the lipoyl domains of lipoate-dependent enzymes, thereby converting the octanoylated domains into lipoylated derivatives. This is Lipoyl synthase, mitochondrial from Lachancea thermotolerans (strain ATCC 56472 / CBS 6340 / NRRL Y-8284) (Yeast).